The primary structure comprises 253 residues: Blue-light photoreceptor (253 aa).

The 74-residue stretch at 6–79 (QFDVILKALN…AKIRHAINEK (74 aa)) folds into the PAS domain. Cysteine 56 carries the post-translational modification S-4a-FMN cysteine. The PAC domain occupies 80-133 (STANVLLKNYRKDGTSFMNELTIEPIYDDHEHLYFVGIQKDVTTEHDYQLELEK). The STAS domain maps to 142–253 (STPIVPIKEN…STIKEALQFY (112 aa)).

In terms of processing, FMN binds covalently to cysteine after exposure to blue light and this bond is spontaneously broken in the dark.

In terms of biological role, exhibits the same spectroscopical features and blue-light induced photochemistry as plants phototropins, with the reversible formation of a blue-shifted photoproduct, assigned to an FMN-cysteine thiol adduct. Positive regulator in the activation of the general stress transcription factor sigma-B. The chain is Blue-light photoreceptor from Listeria monocytogenes serovar 1/2a (strain ATCC BAA-679 / EGD-e).